The chain runs to 979 residues: Chromosome partition protein Smc (979 aa).

33 to 40 (PNGSGKSN) contacts ATP. The stretch at 169–400 (SKYKLDKEEA…INILKQQFEN (232 aa)) forms a coiled coil. One can recognise an SMC hinge domain in the interval 419–538 (DGYIGLASEL…DNVDNANRIA (120 aa)). Coiled-coil stretches lie at residues 572–716 (ILNY…HSDS) and 750–818 (SLDL…DKII).

This sequence belongs to the SMC family. In terms of assembly, homodimer.

It localises to the cytoplasm. Its function is as follows. Required for chromosome condensation and partitioning. This Mesomycoplasma hyorhinis (Mycoplasma hyorhinis) protein is Chromosome partition protein Smc.